The primary structure comprises 311 residues: Ribosomal RNA small subunit methyltransferase H (311 aa).

S-adenosyl-L-methionine contacts are provided by residues 32-34 (AGH), aspartate 52, phenylalanine 79, aspartate 100, and glutamine 107.

It belongs to the methyltransferase superfamily. RsmH family.

The protein resides in the cytoplasm. It catalyses the reaction cytidine(1402) in 16S rRNA + S-adenosyl-L-methionine = N(4)-methylcytidine(1402) in 16S rRNA + S-adenosyl-L-homocysteine + H(+). In terms of biological role, specifically methylates the N4 position of cytidine in position 1402 (C1402) of 16S rRNA. The sequence is that of Ribosomal RNA small subunit methyltransferase H from Staphylococcus carnosus (strain TM300).